A 443-amino-acid chain; its full sequence is Probable glycine dehydrogenase (decarboxylating) subunit 1 (443 aa).

The protein belongs to the GcvP family. N-terminal subunit subfamily. As to quaternary structure, the glycine cleavage system is composed of four proteins: P, T, L and H. In this organism, the P 'protein' is a heterodimer of two subunits.

It carries out the reaction N(6)-[(R)-lipoyl]-L-lysyl-[glycine-cleavage complex H protein] + glycine + H(+) = N(6)-[(R)-S(8)-aminomethyldihydrolipoyl]-L-lysyl-[glycine-cleavage complex H protein] + CO2. Its function is as follows. The glycine cleavage system catalyzes the degradation of glycine. The P protein binds the alpha-amino group of glycine through its pyridoxal phosphate cofactor; CO(2) is released and the remaining methylamine moiety is then transferred to the lipoamide cofactor of the H protein. The polypeptide is Probable glycine dehydrogenase (decarboxylating) subunit 1 (Solidesulfovibrio magneticus (strain ATCC 700980 / DSM 13731 / RS-1) (Desulfovibrio magneticus)).